A 503-amino-acid polypeptide reads, in one-letter code: Aromatase (503 aa).

The next 2 membrane-spanning stretches (helical) occupy residues 19-39 and 53-73; these read EVVP…LLVW and FLGI…IGSA. The substrate site is built by Asp309 and Met374. A heme-binding site is contributed by Cys437.

This sequence belongs to the cytochrome P450 family. Heme serves as cofactor.

The protein localises to the endoplasmic reticulum membrane. The protein resides in the microsome membrane. The catalysed reaction is testosterone + 3 reduced [NADPH--hemoprotein reductase] + 3 O2 = 17beta-estradiol + formate + 3 oxidized [NADPH--hemoprotein reductase] + 4 H2O + 4 H(+). It carries out the reaction androst-4-ene-3,17-dione + 3 reduced [NADPH--hemoprotein reductase] + 3 O2 = estrone + formate + 3 oxidized [NADPH--hemoprotein reductase] + 4 H2O + 4 H(+). The enzyme catalyses androst-4-ene-3,17-dione + reduced [NADPH--hemoprotein reductase] + O2 = 19-hydroxyandrost-4-ene-3,17-dione + oxidized [NADPH--hemoprotein reductase] + H2O + H(+). It catalyses the reaction 19-hydroxyandrost-4-ene-3,17-dione + reduced [NADPH--hemoprotein reductase] + O2 = 19-oxo-androst-4-ene-3,17-dione + oxidized [NADPH--hemoprotein reductase] + 2 H2O + H(+). The catalysed reaction is 19-oxo-androst-4-ene-3,17-dione + reduced [NADPH--hemoprotein reductase] + O2 = estrone + formate + oxidized [NADPH--hemoprotein reductase] + H2O + 2 H(+). It carries out the reaction estrone + reduced [NADPH--hemoprotein reductase] + O2 = 2-hydroxyestrone + oxidized [NADPH--hemoprotein reductase] + H2O + H(+). The enzyme catalyses 17beta-hydroxy-5alpha-androstan-3-one + reduced [NADPH--hemoprotein reductase] + O2 = 17beta,19-dihydroxy-3-oxo-5alpha-androstanone + oxidized [NADPH--hemoprotein reductase] + H2O + H(+). It catalyses the reaction 17beta,19-dihydroxy-3-oxo-5alpha-androstanone + reduced [NADPH--hemoprotein reductase] + O2 = 17beta-hydroxy-3,19-dioxo-5alpha-androstanone + oxidized [NADPH--hemoprotein reductase] + 2 H2O + H(+). The catalysed reaction is 17beta-hydroxy-3,19-dioxo-5alpha-androstanone + reduced [NADPH--hemoprotein reductase] + O2 = 17beta-hydroxy-3-oxo-19-nor-5alpha-androst-1-ene + formate + oxidized [NADPH--hemoprotein reductase] + H2O + 2 H(+). The protein operates within steroid hormone biosynthesis. In terms of biological role, a cytochrome P450 monooxygenase that catalyzes the conversion of C19 androgens, androst-4-ene-3,17-dione (androstenedione) and testosterone to the C18 estrogens, estrone and estradiol, respectively. Catalyzes three successive oxidations of C19 androgens: two conventional oxidations at C19 yielding 19-hydroxy and 19-oxo/19-aldehyde derivatives, followed by a third oxidative aromatization step that involves C1-beta hydrogen abstraction combined with cleavage of the C10-C19 bond to yield a phenolic A ring and formic acid. Alternatively, the third oxidative reaction yields a 19-norsteroid and formic acid. Converts dihydrotestosterone to delta1,10-dehydro 19-nordihydrotestosterone and may play a role in homeostasis of this potent androgen. Also displays 2-hydroxylase activity toward estrone. Mechanistically, uses molecular oxygen inserting one oxygen atom into a substrate, and reducing the second into a water molecule, with two electrons provided by NADPH via cytochrome P450 reductase (CPR; NADPH-ferrihemoprotein reductase). This Bos taurus (Bovine) protein is Aromatase (CYP19A1).